Consider the following 176-residue polypeptide: MARYEDLPYRTCVGMMLLNAEGLVFIGRRSGGIEHVDDSHVWQMPQGGVDPGEDTWAAAKRELYEETSVQSVEKLGEISDWLIYDIPRTVAGRAWKGRYRGQRQKWYAVRFTGLDSEIDVTTPGGGHKAEFISWRWEPMQNLPNLIVPFKRPVYERVVKEFSALGFPEPKASVGHR.

Residues 8–159 (PYRTCVGMML…KRPVYERVVK (152 aa)) form the Nudix hydrolase domain. The Nudix box signature appears at 47–68 (GGVDPGEDTWAAAKRELYEETS).

The protein belongs to the Nudix hydrolase family. RppH subfamily. It depends on a divalent metal cation as a cofactor.

Its function is as follows. Accelerates the degradation of transcripts by removing pyrophosphate from the 5'-end of triphosphorylated RNA, leading to a more labile monophosphorylated state that can stimulate subsequent ribonuclease cleavage. The chain is RNA pyrophosphohydrolase from Rhodopseudomonas palustris (strain BisA53).